The sequence spans 251 residues: Triosephosphate isomerase (251 aa).

9-11 is a binding site for substrate; that stretch reads NWK. His95 serves as the catalytic Electrophile. Catalysis depends on Glu167, which acts as the Proton acceptor. Substrate-binding positions include Gly173, Ser213, and 234-235; that span reads GG. At Ser213 the chain carries Phosphoserine.

It belongs to the triosephosphate isomerase family. Homodimer.

Its subcellular location is the cytoplasm. The catalysed reaction is D-glyceraldehyde 3-phosphate = dihydroxyacetone phosphate. The protein operates within carbohydrate biosynthesis; gluconeogenesis. It participates in carbohydrate degradation; glycolysis; D-glyceraldehyde 3-phosphate from glycerone phosphate: step 1/1. Involved in the gluconeogenesis. Catalyzes stereospecifically the conversion of dihydroxyacetone phosphate (DHAP) to D-glyceraldehyde-3-phosphate (G3P). The sequence is that of Triosephosphate isomerase from Bacillus cereus (strain B4264).